The chain runs to 338 residues: Ketol-acid reductoisomerase (NADP(+)) (338 aa).

One can recognise a KARI N-terminal Rossmann domain in the interval 1–181 (MNVYYDKDCD…GGGRSGIIET (181 aa)). Residues 24–27 (YGSQ), arginine 47, serine 50, serine 52, and 82–85 (DEFQ) each bind NADP(+). Residue histidine 107 is part of the active site. NADP(+) is bound at residue glycine 133. The 146-residue stretch at 182-327 (TFKDETETDL…AKLRGMMPWI (146 aa)) folds into the KARI C-terminal knotted domain. Positions 190, 194, 226, and 230 each coordinate Mg(2+). Position 251 (serine 251) interacts with substrate.

The protein belongs to the ketol-acid reductoisomerase family. Mg(2+) serves as cofactor.

The enzyme catalyses (2R)-2,3-dihydroxy-3-methylbutanoate + NADP(+) = (2S)-2-acetolactate + NADPH + H(+). It carries out the reaction (2R,3R)-2,3-dihydroxy-3-methylpentanoate + NADP(+) = (S)-2-ethyl-2-hydroxy-3-oxobutanoate + NADPH + H(+). It participates in amino-acid biosynthesis; L-isoleucine biosynthesis; L-isoleucine from 2-oxobutanoate: step 2/4. It functions in the pathway amino-acid biosynthesis; L-valine biosynthesis; L-valine from pyruvate: step 2/4. Involved in the biosynthesis of branched-chain amino acids (BCAA). Catalyzes an alkyl-migration followed by a ketol-acid reduction of (S)-2-acetolactate (S2AL) to yield (R)-2,3-dihydroxy-isovalerate. In the isomerase reaction, S2AL is rearranged via a Mg-dependent methyl migration to produce 3-hydroxy-3-methyl-2-ketobutyrate (HMKB). In the reductase reaction, this 2-ketoacid undergoes a metal-dependent reduction by NADPH to yield (R)-2,3-dihydroxy-isovalerate. The chain is Ketol-acid reductoisomerase (NADP(+)) from Psychrobacter arcticus (strain DSM 17307 / VKM B-2377 / 273-4).